A 488-amino-acid chain; its full sequence is Cytochrome P450 family 716 subfamily AD polypeptide 2 (488 aa).

A helical membrane pass occupies residues 5–25; sequence LLLLSTLLILTLCCHFFYLFI. Residue cysteine 433 coordinates heme.

It belongs to the cytochrome P450 family. Heme is required as a cofactor. In terms of tissue distribution, expressed in maturing fruits and in juice vesicles.

The protein localises to the membrane. It catalyses the reaction (1R,2R,3S,8R,10R,11R,15S,16S)-3-(acetyloxy)-15-[(4R)-4-[(2S)-3,3-dimethyloxiran-2-yl]-1,4-dihydroxybutan-2-yl]-2,7,7,11,16-pentamethyl-5-oxo-6-oxatetracyclo[9.7.0.0(2,8).0(12,16)]octadec-12-en-10-yl acetate + reduced [NADPH--hemoprotein reductase] + O2 = (1R,2R,3S,8R,10R,11R,15S,16S)-3-(acetyloxy)-15-(1-hydroxy-4-oxobutan-2-yl)-2,7,7,11,16-pentamethyl-5-oxo-6-oxatetracyclo[9.7.0.0(2,8).0(12,16)]octadec-12-en-10-yl acetate + 2-methylpropanoate + oxidized [NADPH--hemoprotein reductase] + H2O + 2 H(+). It participates in secondary metabolite biosynthesis; terpenoid biosynthesis. Functionally, monooxygenase involved in the biosynthesis of limonoids triterpene natural products such as limonin, a compound with insecticidal activity responsible for the bitter taste in citrus. Catalyzes the formation of (1R,2R,3S,8R,10R,11R,15S,16S)-3-(acetyloxy)-15-(1-hydroxy-4-oxobutan-2-yl)-2,7,7,11,16-pentamethyl-5-oxo-6-oxatetracyclo[9.7.0.0(2,8).0(12,16)]octadec-12-en-10-yl acetate. The sequence is that of Cytochrome P450 family 716 subfamily AD polypeptide 2 from Citrus sinensis (Sweet orange).